A 550-amino-acid polypeptide reads, in one-letter code: Chaperonin GroEL (550 aa).

ATP is bound by residues 30–33, K51, 87–91, G415, 479–481, and D495; these read TLGP, DGTTT, and NAA. Residues 525 to 550 are disordered; sequence PKDEKSSSELNSAPGNGMGGGMGGMM. A compositionally biased stretch (gly residues) spans 540–550; that stretch reads NGMGGGMGGMM.

This sequence belongs to the chaperonin (HSP60) family. Forms a cylinder of 14 subunits composed of two heptameric rings stacked back-to-back. Interacts with the co-chaperonin GroES.

The protein resides in the cytoplasm. The enzyme catalyses ATP + H2O + a folded polypeptide = ADP + phosphate + an unfolded polypeptide.. Together with its co-chaperonin GroES, plays an essential role in assisting protein folding. The GroEL-GroES system forms a nano-cage that allows encapsulation of the non-native substrate proteins and provides a physical environment optimized to promote and accelerate protein folding. This chain is Chaperonin GroEL, found in Buchnera aphidicola subsp. Cinara cedri (strain Cc).